Consider the following 341-residue polypeptide: UDP-glucose 4-epimerase (341 aa).

The protein belongs to the polysaccharide synthase family.

It carries out the reaction UDP-alpha-D-glucose = UDP-alpha-D-galactose. In terms of biological role, epimerizes UDP-galactose to UDP-glucose. The chain is UDP-glucose 4-epimerase (capD) from Rickettsia akari (strain Hartford).